Reading from the N-terminus, the 447-residue chain is UDP-N-acetylmuramoylalanine--D-glutamate ligase (447 aa).

112-118 (GTNGKST) lines the ATP pocket.

The protein belongs to the MurCDEF family.

It is found in the cytoplasm. The enzyme catalyses UDP-N-acetyl-alpha-D-muramoyl-L-alanine + D-glutamate + ATP = UDP-N-acetyl-alpha-D-muramoyl-L-alanyl-D-glutamate + ADP + phosphate + H(+). It participates in cell wall biogenesis; peptidoglycan biosynthesis. Its function is as follows. Cell wall formation. Catalyzes the addition of glutamate to the nucleotide precursor UDP-N-acetylmuramoyl-L-alanine (UMA). This chain is UDP-N-acetylmuramoylalanine--D-glutamate ligase, found in Legionella pneumophila subsp. pneumophila (strain Philadelphia 1 / ATCC 33152 / DSM 7513).